The sequence spans 145 residues: LIM domain only protein 3 (145 aa).

LIM zinc-binding domains are found at residues 11–73 (KGCA…LFGT) and 75–137 (GNCA…GLMK).

This is LIM domain only protein 3 (Lmo3) from Rattus norvegicus (Rat).